The sequence spans 409 residues: Beta-arrestin-2 (409 aa).

At Tyr-48 the chain carries Phosphotyrosine. Hydroxyproline; by PHD2 occurs at positions 176 and 181. The segment at 240-409 (ADICLFSTAQ…KDDDYDDQLC (170 aa)) is interaction with TRAF6. Position 360 is a phosphoserine (Ser-360). Residues 363 to 409 (PETDVPVDTNLIEFDTNYATDDDIVFEDFARLRLKGMKDDDYDDQLC) are interaction with AP2B1. The residue at position 382 (Thr-382) is a Phosphothreonine. Positions 385–395 (DIVFEDFARLR) match the [DE]-X(1,2)-F-X-X-[FL]-X-X-X-R motif motif.

Belongs to the arrestin family. In terms of assembly, homooligomer; the self-association is mediated by InsP6-binding. Heterooligomer with ARRB1; the association is mediated by InsP6-binding. Interacts with ADRB2 and CHRM2. Interacts with PDE4A. Interacts with PDE4D. Interacts with MAPK10, MAPK1 and MAPK3. Interacts with DRD2. Interacts with FSHR. Interacts with CLTC. Interacts with HTR2C. Interacts with CCR5. Interacts with CXCR4. Interacts with SRC. Interacts with DUSP16; the interaction is interrupted by stimulation of AGTR1 and activation of MAPK10. Interacts with CHUK; the interaction is enhanced stimulation of ADRB2. Interacts with RELA. Interacts with MDM2; the interaction is enhanced by activation of GPCRs. Interacts with SLC9A5. Interacts with TRAF6. Interacts with IGF1R. Interacts with ENG. Interacts with KIR2DL1, KIR2DL3 and KIR2DL4. Interacts with LDLR. Interacts with AP2B1. Interacts with C5AR1. Interacts with RAF1. Interacts with MAP2K1. Interacts with MAPK1. Interacts with MAPK10; the interaction enhances MAPK10 activation by MAP3K5. Interacts with MAP2K4; the interaction is enhanced by presence of MAP3K5 and MAPK10. Interacts with MAP3K5. Interacts with AKT1. Interacts with IKBKB and MAP3K14. Interacts with SMO (activated). Interacts with GSK3A and GSK3B. Associates with protein phosphatase 2A (PP2A). Interacts with DHX8; the interaction is detected in the nucleus upon OR1D2 stimulation. Interacts with GAPDHS; the interaction is detected in the nucleus upon OR1D2 stimulation. Interacts with H2AFX; the interaction is detected in the nucleus upon OR1D2 stimulation. Interacts with KIF14; the interaction is detected in the nucleus upon OR1D2 stimulation. Interacts with RCC1; the interaction is detected in the nucleus upon OR1D2 stimulation. Interacts with CXCR4; the interaction is dependent on C-terminal phosphorylation of CXCR4 and allows activation of MAPK1 and MAPK3. Interacts with GPR143. Interacts with HCK and CXCR1 (phosphorylated). Interacts with ACKR3 and ACKR4. Interacts with ARRDC1; the interaction is direct. Interacts with GPR61, GPR62 and GPR135. Interacts (via NACHT and LRR domains) with NLRP3; this interaction is direct and inducible by omega-3 polyunsaturated fatty acids (PUFAs). Interacts with FFAR4 (via C-terminus); this interaction is stimulated by long-chain fatty acids (LCFAs). Interacts with GPR35. Interacts with GPR84. Interacts with TIGIT; this interaction inhibits the NF-kappa-B pathway. Interacts with TGFBR3. Phosphorylated at Thr-382 in the cytoplasm; probably dephosphorylated at the plasma membrane. The phosphorylation does not regulate internalization and recycling of ADRB2, interaction with clathrin or AP2B1. In terms of processing, the ubiquitination status appears to regulate the formation and trafficking of beta-arrestin-GPCR complexes and signaling. Ubiquitination appears to occur GPCR-specific. Ubiquitinated by MDM2; the ubiquitination is required for rapid internalization of ADRB2. Deubiquitinated by USP33; the deubiquitination leads to a dissociation of the beta-arrestin-GPCR complex. Stimulation of a class A GPCR, such as ADRB2, induces transient ubiquitination and subsequently promotes association with USP33. Stimulation of a class B GPCR promotes a sustained ubiquitination. Deubiquitinated by USP20; allowing USP20 to deubiquitinate TRAF6 leading to inhibition of NF-kappa-B signaling. Post-translationally, hydroxylation by PHD2 modulates the rate of internalization by slowing down recruitment to the plasma membrane and inhibiting subsequent co-internalization with class A receptors.

It is found in the cytoplasm. Its subcellular location is the nucleus. It localises to the cell membrane. The protein localises to the membrane. The protein resides in the clathrin-coated pit. It is found in the cytoplasmic vesicle. Functions in regulating agonist-mediated G-protein coupled receptor (GPCR) signaling by mediating both receptor desensitization and resensitization processes. During homologous desensitization, beta-arrestins bind to the GPRK-phosphorylated receptor and sterically preclude its coupling to the cognate G-protein; the binding appears to require additional receptor determinants exposed only in the active receptor conformation. The beta-arrestins target many receptors for internalization by acting as endocytic adapters (CLASPs, clathrin-associated sorting proteins) and recruiting the GPRCs to the adapter protein 2 complex 2 (AP-2) in clathrin-coated pits (CCPs). However, the extent of beta-arrestin involvement appears to vary significantly depending on the receptor, agonist and cell type. Internalized arrestin-receptor complexes traffic to intracellular endosomes, where they remain uncoupled from G-proteins. Two different modes of arrestin-mediated internalization occur. Class A receptors, like ADRB2, OPRM1, ENDRA, D1AR and ADRA1B dissociate from beta-arrestin at or near the plasma membrane and undergo rapid recycling. Class B receptors, like AVPR2, AGTR1, NTSR1, TRHR and TACR1 internalize as a complex with arrestin and traffic with it to endosomal vesicles, presumably as desensitized receptors, for extended periods of time. Receptor resensitization then requires that receptor-bound arrestin is removed so that the receptor can be dephosphorylated and returned to the plasma membrane. Mediates endocytosis of CCR7 following ligation of CCL19 but not CCL21. Involved in internalization of P2RY1, P2RY4, P2RY6 and P2RY11 and ATP-stimulated internalization of P2RY2. Involved in phosphorylation-dependent internalization of OPRD1 and subsequent recycling or degradation. Involved in ubiquitination of IGF1R. Beta-arrestins function as multivalent adapter proteins that can switch the GPCR from a G-protein signaling mode that transmits short-lived signals from the plasma membrane via small molecule second messengers and ion channels to a beta-arrestin signaling mode that transmits a distinct set of signals that are initiated as the receptor internalizes and transits the intracellular compartment. Acts as a signaling scaffold for MAPK pathways such as MAPK1/3 (ERK1/2) and MAPK10 (JNK3). ERK1/2 and JNK3 activated by the beta-arrestin scaffold are largely excluded from the nucleus and confined to cytoplasmic locations such as endocytic vesicles, also called beta-arrestin signalosomes. Acts as a signaling scaffold for the AKT1 pathway. GPCRs for which the beta-arrestin-mediated signaling relies on both ARRB1 and ARRB2 (codependent regulation) include ADRB2, F2RL1 and PTH1R. For some GPCRs the beta-arrestin-mediated signaling relies on either ARRB1 or ARRB2 and is inhibited by the other respective beta-arrestin form (reciprocal regulation). Increases ERK1/2 signaling in AGTR1- and AVPR2-mediated activation (reciprocal regulation). Involved in CCR7-mediated ERK1/2 signaling involving ligand CCL19. Is involved in type-1A angiotensin II receptor/AGTR1-mediated ERK activity. Is involved in type-1A angiotensin II receptor/AGTR1-mediated MAPK10 activity. Is involved in dopamine-stimulated AKT1 activity in the striatum by disrupting the association of AKT1 with its negative regulator PP2A. Involved in AGTR1-mediated chemotaxis. Appears to function as signaling scaffold involved in regulation of MIP-1-beta-stimulated CCR5-dependent chemotaxis. Involved in attenuation of NF-kappa-B-dependent transcription in response to GPCR or cytokine stimulation by interacting with and stabilizing CHUK. Suppresses UV-induced NF-kappa-B-dependent activation by interacting with CHUK. The function is promoted by stimulation of ADRB2 and dephosphorylation of ARRB2. Involved in p53/TP53-mediated apoptosis by regulating MDM2 and reducing the MDM2-mediated degradation of p53/TP53. May serve as nuclear messenger for GPCRs. Upon stimulation of OR1D2, may be involved in regulation of gene expression during the early processes of fertilization. Also involved in regulation of receptors other than GPCRs. Involved in endocytosis of TGFBR2 and TGFBR3 and down-regulates TGF-beta signaling such as NF-kappa-B activation. Involved in endocytosis of low-density lipoprotein receptor/LDLR. Involved in endocytosis of smoothened homolog/Smo, which also requires GRK2. Involved in endocytosis of SLC9A5. Involved in endocytosis of ENG and subsequent TGF-beta-mediated ERK activation and migration of epithelial cells. Involved in Toll-like receptor and IL-1 receptor signaling through the interaction with TRAF6 which prevents TRAF6 autoubiquitination and oligomerization required for activation of NF-kappa-B and JUN. Involved in insulin resistance by acting as insulin-induced signaling scaffold for SRC, AKT1 and INSR. Involved in regulation of inhibitory signaling of natural killer cells by recruiting PTPN6 and PTPN11 to KIR2DL1. Involved in IL8-mediated granule release in neutrophils. Involved in the internalization of the atypical chemokine receptor ACKR3. Acts as an adapter protein coupling FFAR4 receptor to specific downstream signaling pathways, as well as mediating receptor endocytosis. During the activation step of NLRP3 inflammasome, directly associates with NLRP3 leading to inhibition of pro-inflammatory cytokine release and inhibition of inflammation. The protein is Beta-arrestin-2 (ARRB2) of Homo sapiens (Human).